A 115-amino-acid chain; its full sequence is Glutaredoxin 4 (115 aa).

The 103-residue stretch at 5 to 107 (IEKIQRQIAE…QLIKETAAKY (103 aa)) folds into the Glutaredoxin domain. A glutathione-binding site is contributed by K22. A [2Fe-2S] cluster-binding site is contributed by C30. Glutathione contacts are provided by residues R59, F71, and 84 to 85 (CD).

Belongs to the glutaredoxin family. Monothiol subfamily. Homodimer.

It is found in the cytoplasm. Functionally, monothiol glutaredoxin involved in the biogenesis of iron-sulfur clusters. The polypeptide is Glutaredoxin 4 (grxD) (Shigella flexneri).